The following is a 297-amino-acid chain: Counting factor 45-1 (297 aa).

The signal sequence occupies residues 1-20 (MNKLISLLLVCLVAIALVNA). Residues 24–235 (IDFDSDTVNS…SASTGSGSGS (212 aa)) form the Ch-type lysozyme domain. Catalysis depends on residues Asp29, Asp119, and Glu121. Residue Asn166 is glycosylated (N-linked (GlcNAc...) asparagine). Positions 231–296 (SGSGSSSGSS…GSSSGSGSGS (66 aa)) are S-G-S motif repeats. Positions 231 to 297 (SGSGSSSGSS…SSSGSGSGSS (67 aa)) are disordered. Low complexity predominate over residues 234 to 275 (GSSSGSSSGSSSGSSSGSGSSSGSGSSSGSSSGSGSGSSSSG). The segment covering 276 to 297 (SGSGSGSSSGSGSSSGSGSGSS) has biased composition (gly residues).

The protein belongs to the glycosyl hydrolase 25 family. In terms of assembly, monomer. Component of the counting factor (CF) complex, which includes cf60, cf50, cf45-1 and ctnA.

The protein localises to the secreted. Functionally, cell-counting factor that limits the maximum size of the multicellular structure during aggregation. This Dictyostelium discoideum (Social amoeba) protein is Counting factor 45-1 (cf45-1).